Reading from the N-terminus, the 538-residue chain is GSY2-interacting protein PIG2 (538 aa).

A phosphoserine mark is found at serine 162, serine 196, serine 296, and serine 304. The CBM21 domain occupies 384–508; that stretch reads LNLSRGRPVF…NNDSANYKID (125 aa).

In terms of biological role, interacts with glycogen synthase 2 (GSY2); possibly also interacts with phosphatase 1 (GLC7). This chain is GSY2-interacting protein PIG2 (PIG2), found in Saccharomyces cerevisiae (strain ATCC 204508 / S288c) (Baker's yeast).